Consider the following 920-residue polypeptide: Periplasmic nitrate reductase (920 aa).

Residues 1–29 constitute a signal peptide (tat-type signal); it reads MNRRDFIKSTAAAAACASAGIALPANLNA. In terms of domain architecture, 4Fe-4S Mo/W bis-MGD-type spans 35-91; it reads WRWDKAVCRFCGTGCGIMVATKNGKIVAVKGDPEAPVNRGLNCIKGYFNAKIMYGDD. Residues Cys42, Cys45, Cys49, and Cys77 each contribute to the [4Fe-4S] cluster site. Mo-bis(molybdopterin guanine dinucleotide) contacts are provided by residues Lys79, Gln147, Asn172, Cys176, 209–216, Met416, Gln420, Asn526, 551–552, Lys574, Asp601, and 810–819; these read WGANMAEM, SD, and TGRVLEHWHS. Trp886 is a substrate binding site. Asn894 and Lys911 together coordinate Mo-bis(molybdopterin guanine dinucleotide).

It belongs to the prokaryotic molybdopterin-containing oxidoreductase family. NasA/NapA/NarB subfamily. In terms of assembly, component of the periplasmic nitrate reductase NapAB complex composed of NapA and NapB. [4Fe-4S] cluster is required as a cofactor. The cofactor is Mo-bis(molybdopterin guanine dinucleotide). In terms of processing, predicted to be exported by the Tat system. The position of the signal peptide cleavage has not been experimentally proven.

It localises to the periplasm. The enzyme catalyses 2 Fe(II)-[cytochrome] + nitrate + 2 H(+) = 2 Fe(III)-[cytochrome] + nitrite + H2O. Functionally, catalytic subunit of the periplasmic nitrate reductase complex NapAB. Receives electrons from NapB and catalyzes the reduction of nitrate to nitrite. This Campylobacter hominis (strain ATCC BAA-381 / DSM 21671 / CCUG 45161 / LMG 19568 / NCTC 13146 / CH001A) protein is Periplasmic nitrate reductase.